A 414-amino-acid chain; its full sequence is 2,3-diketo-5-methylthiopentyl-1-phosphate enolase (414 aa).

Lys99 functions as the Proton acceptor in the catalytic mechanism. Substrate contacts are provided by residues Lys148, 174 to 177 (KDDE), His265, Gly338, and 360 to 361 (GG). Mg(2+)-binding residues include Lys174, Asp176, and Glu177. Lys174 is modified (N6-carboxylysine).

It belongs to the RuBisCO large chain family. Type IV subfamily. Homodimer. The cofactor is Mg(2+).

It carries out the reaction 5-methylsulfanyl-2,3-dioxopentyl phosphate = 2-hydroxy-5-methylsulfanyl-3-oxopent-1-enyl phosphate. It participates in amino-acid biosynthesis; L-methionine biosynthesis via salvage pathway; L-methionine from S-methyl-5-thio-alpha-D-ribose 1-phosphate: step 3/6. Its function is as follows. Catalyzes the enolization of 2,3-diketo-5-methylthiopentyl-1-phosphate (DK-MTP-1-P) into 2-hydroxy-3-keto-5-methylthiopentenyl-1-phosphate (HK-MTPenyl-1-P). The polypeptide is 2,3-diketo-5-methylthiopentyl-1-phosphate enolase (Bacillus cereus (strain ZK / E33L)).